We begin with the raw amino-acid sequence, 773 residues long: E3 ubiquitin-protein ligase RFWD3 (773 aa).

Disordered regions lie at residues 18–67 (VAEQ…SQVG), 92–117 (RVEN…IPVS), 139–230 (LRPP…EEVV), and 259–279 (GETL…SVSK). A Phosphoserine; by ATM and ATR modification is found at Ser47. A compositionally biased stretch (low complexity) spans 50-59 (APPLLQPAPA). A Phosphoserine; by ATM and ATR modification is found at Ser64. Residues 151–164 (RSRRRRGSASRRSR) are compositionally biased toward basic residues. A compositionally biased stretch (polar residues) spans 186 to 205 (VSRTQPHLPSMSQDSETRNP). Low complexity predominate over residues 207 to 221 (SEDLQVSSSSSSDSE). Polar residues predominate over residues 263 to 273 (PKQSPQKTNPL). The RING-type; degenerate zinc-finger motif lies at 287-331 (CTICFEHWTNAGDHRLSALRCGHLFGYKCISKWLKGQARKCPQCN). The stretch at 361-403 (SLLKEQMLRKQAELESAQCRLQLQVLTDECSKLHSRVQDLQKL) forms a coiled coil. 3 WD repeats span residues 494 to 536 (MHGK…QTYN), 538 to 576 (GRPV…SHIQ), and 582 to 627 (KARC…SHWP).

Interacts with MDM2 and p53/TP53. Binds to the RPA complex via direct interaction with RPA2. Interacts with RAD51. In terms of processing, phosphorylated at Ser-46 and Ser-63 upon DNA damage by ATM or ATR. ATM phosphorylation occurs at early times upon DNA damage, while ATR is the major kinase at later times. Phosphorylation by ATM and ATR is required to stabilize p53/TP53. Part of the phosphorylation depends upon RPA2 presence.

It is found in the nucleus. Its subcellular location is the PML body. It localises to the cytoplasm. It carries out the reaction S-ubiquitinyl-[E2 ubiquitin-conjugating enzyme]-L-cysteine + [acceptor protein]-L-lysine = [E2 ubiquitin-conjugating enzyme]-L-cysteine + N(6)-ubiquitinyl-[acceptor protein]-L-lysine.. It functions in the pathway protein modification; protein ubiquitination. Functionally, E3 ubiquitin-protein ligase required for the repair of DNA interstrand cross-links (ICL) in response to DNA damage. Plays a key role in RPA-mediated DNA damage signaling and repair. Acts by mediating ubiquitination of the RPA complex (RPA1, RPA2 and RPA3 subunits) and RAD51 at stalled replication forks, leading to remove them from DNA damage sites and promote homologous recombination. Also mediates the ubiquitination of p53/TP53 in the late response to DNA damage, and acts as a positive regulator of p53/TP53 stability, thereby regulating the G1/S DNA damage checkpoint. May act by catalyzing the formation of short polyubiquitin chains on p53/TP53 that are not targeted to the proteasome. In response to ionizing radiation, interacts with MDM2 and enhances p53/TP53 ubiquitination, possibly by restricting MDM2 from extending polyubiquitin chains on ubiquitinated p53/TP53. Required to translesion DNA synthesis across DNA-protein cross-link adducts by catalyzing ubiquitination of proteins on single-stranded DNA (ssDNA). The protein is E3 ubiquitin-protein ligase RFWD3 (RFWD3) of Ailuropoda melanoleuca (Giant panda).